Reading from the N-terminus, the 114-residue chain is Transcription factor S1 (114 aa).

Positions 1-43 (MIVVKFCPKCNSMMVPKKSNGKNVYRCTKCGYEKEVPETTIVV) are N-ZR. The Zn(2+) site is built by Cys-7, Cys-10, Cys-27, Cys-30, Cys-75, and Cys-78. The interval 63-114 (MPSGAQKIKGVLCPSCKNDEAYFWILQTRRADEPPTRFYKCTKCGKVWREYE) is C-ZR. The TFIIS-type zinc finger occupies 71–111 (KGVLCPSCKNDEAYFWILQTRRADEPPTRFYKCTKCGKVWR). Residues Asp-94 and Glu-95 contribute to the active site. Residues Cys-103 and Cys-106 each contribute to the Zn(2+) site.

This sequence belongs to the archaeal RpoM/eukaryotic RPA12/RPB9/RPC11 RNA polymerase family. Interacts with RNA polymerase; probably competes with TFS4 for the same binding site. It depends on Zn(2+) as a cofactor.

Functionally, induces RNA cleavage activity in the RNA polymerase. Induces rapid cleavage of a stalled transcription elongation complex with a 2-nucleotide reduction at the 3' end of the nascent RNA. Truncated RNA is able to resume elongation. During transcription elongation it enhances processivity. Involved in transcriptional proofreading and fidelity. Misincorporation of nucleotides during elongation of transcription leads to arrested elongation complexes which are rescued by TFS-promoted removal of a dinucleotide from the 3'-end. TFS1 is able to induce a cleavage resynthesis cycle in stalled elongation complexes (resulting from the next missing nucleotide or a reduced incorporation rate of a wrong nucleotide) preventing misincorporation and enabling proofreading in a post-incorporation manner. Pausing of elongation complexes is the main determinant of TFS-induced RNA cleavage. The protein is Transcription factor S1 of Saccharolobus solfataricus (strain ATCC 35092 / DSM 1617 / JCM 11322 / P2) (Sulfolobus solfataricus).